A 372-amino-acid polypeptide reads, in one-letter code: Probable inactive receptor-like protein kinase At1g65250 (372 aa).

ATP is bound by residues 1 to 4 (MGWL) and Lys-38. The 314-residue stretch at 1–314 (MGWLRKKKKP…QERCQMKAFL (314 aa)) folds into the Protein kinase domain. 2 positions are modified to phosphotyrosine: Tyr-128 and Tyr-221. Residues 348–372 (SSSLSSGQTQLDSAQDISSTVVLSN) are disordered. The span at 354–372 (GQTQLDSAQDISSTVVLSN) shows a compositional bias: polar residues.

The protein belongs to the protein kinase superfamily.

In Arabidopsis thaliana (Mouse-ear cress), this protein is Probable inactive receptor-like protein kinase At1g65250.